The following is a 452-amino-acid chain: UDP-N-acetylmuramoylalanine--D-glutamate ligase (452 aa).

119 to 125 (GSNGKTT) is a binding site for ATP.

The protein belongs to the MurCDEF family.

It is found in the cytoplasm. It catalyses the reaction UDP-N-acetyl-alpha-D-muramoyl-L-alanine + D-glutamate + ATP = UDP-N-acetyl-alpha-D-muramoyl-L-alanyl-D-glutamate + ADP + phosphate + H(+). It functions in the pathway cell wall biogenesis; peptidoglycan biosynthesis. Cell wall formation. Catalyzes the addition of glutamate to the nucleotide precursor UDP-N-acetylmuramoyl-L-alanine (UMA). The protein is UDP-N-acetylmuramoylalanine--D-glutamate ligase of Streptococcus equi subsp. zooepidemicus (strain MGCS10565).